Consider the following 637-residue polypeptide: Chaperone protein DnaK (637 aa).

Position 203 is a phosphothreonine; by autocatalysis (Thr203). Positions 600 to 637 (SAVYGQQQEQGAPAQEEPSAEGKKNDDEGTVEGEFREV) are disordered. Residues 604-616 (GQQQEQGAPAQEE) are compositionally biased toward low complexity. A compositionally biased stretch (basic and acidic residues) spans 619–637 (AEGKKNDDEGTVEGEFREV).

Belongs to the heat shock protein 70 family.

Acts as a chaperone. The polypeptide is Chaperone protein DnaK (Dehalococcoides mccartyi (strain ATCC BAA-2266 / KCTC 15142 / 195) (Dehalococcoides ethenogenes (strain 195))).